A 425-amino-acid polypeptide reads, in one-letter code: Glutamyl-tRNA reductase (425 aa).

Substrate-binding positions include 49–52 (TCNR), S109, 114–116 (EGQ), and Q120. C50 functions as the Nucleophile in the catalytic mechanism. An NADP(+)-binding site is contributed by 189–194 (GAGKMS).

It belongs to the glutamyl-tRNA reductase family. In terms of assembly, homodimer.

The catalysed reaction is (S)-4-amino-5-oxopentanoate + tRNA(Glu) + NADP(+) = L-glutamyl-tRNA(Glu) + NADPH + H(+). It participates in porphyrin-containing compound metabolism; protoporphyrin-IX biosynthesis; 5-aminolevulinate from L-glutamyl-tRNA(Glu): step 1/2. Its pathway is porphyrin-containing compound metabolism; chlorophyll biosynthesis. In terms of biological role, catalyzes the NADPH-dependent reduction of glutamyl-tRNA(Glu) to glutamate 1-semialdehyde (GSA). The sequence is that of Glutamyl-tRNA reductase from Picosynechococcus sp. (strain ATCC 27264 / PCC 7002 / PR-6) (Agmenellum quadruplicatum).